Consider the following 308-residue polypeptide: Ankyrin repeat and SOCS box protein 12 (308 aa).

5 ANK repeats span residues 63-92, 96-125, 129-158, 171-200, and 213-243; these read IPGTPLRLAASYGHLNCVKVLLEHGADVDS, KAQTPLFTAVSHGHLECVRMLLEAGACPSG, NNCSPVLTASRDGAFAILQELLGHGAEANV, SCSGPLYLAAVYGHLDCFRLLLLYGADPDY, and QPRTLLEICLHHNCEPEYIQLLIDFGANIYL. The region spanning 268–308 is the SOCS box domain; sequence PRSLLSQTRLVIRRSLCRANQSQATDQLDIPPVLISYLKHQ.

The protein belongs to the ankyrin SOCS box (ASB) family. As to quaternary structure, interacts with CUL5 and RNF7.

It functions in the pathway protein modification; protein ubiquitination. In terms of biological role, probable substrate-recognition component of a SCF-like ECS (Elongin-Cullin-SOCS-box protein) E3 ubiquitin-protein ligase complex which mediates the ubiquitination and subsequent proteasomal degradation of target proteins. The sequence is that of Ankyrin repeat and SOCS box protein 12 (Asb12) from Mus musculus (Mouse).